The sequence spans 853 residues: MICAL-like protein 1 (853 aa).

In terms of domain architecture, Calponin-homology (CH) spans 2–108 (AGPRGALLAW…YVSQYYNHFA (107 aa)). Disordered stretches follow at residues 118–162 (PRKG…TPSS) and 224–659 (SGRS…FPLI). Positions 145–162 (ECSSGSLSKQGSHRTPSS) are enriched in polar residues. The 63-residue stretch at 162-224 (STCAACQQHV…AEHCARLGPS (63 aa)) folds into the LIM zinc-binding domain. S292 and S306 each carry phosphoserine. 2 positions are modified to phosphothreonine: T312 and T315. Residues 355–366 (LSERTPAPRKDP) are compositionally biased toward basic and acidic residues. The span at 381 to 394 (APLPPSSSPGPPPG) shows a compositional bias: pro residues. S388 bears the Phosphoserine mark. Positions 419 to 421 (NPF) match the NPF1 motif. The span at 429–445 (PAAPSPAPGPAPTPPES) shows a compositional bias: pro residues. Phosphothreonine is present on residues T457 and T459. Phosphoserine is present on residues S460, S461, S474, and S476. 2 stretches are compositionally biased toward low complexity: residues 495–515 (PSPA…APSE) and 541–553 (SASL…LSSS). Phosphoserine occurs at positions 568 and 611. Over residues 607–618 (PGTSSPQLQVKS) the composition is skewed to polar residues. Residues 623–625 (NPF) carry the NPF2 motif. Residues 642 to 853 (KGSKPARPPA…TKSKCPGDRS (212 aa)) are mediates the interaction with RAB13 and RAB35 and intramolecular interaction with the CH domain. Residues 661–808 (RKVQSDQYIP…EEEEDKMLEA (148 aa)) form the bMERB domain. The stretch at 671 to 701 (EEDIHGEIDTIERQLDALEHRGVLLEEKLRG) forms a coiled coil. The necessary and sufficient to associate with tubular recycling endosome membranes, mediate phosphatidic acid-binding and membrane tubulation stretch occupies residues 690–853 (HRGVLLEEKL…TKSKCPGDRS (164 aa)). S730 carries the phosphoserine modification. Residues 791-820 (CLDEDRQREEEEDKMLEAMIKKKEFQKETE) adopt a coiled-coil conformation.

In terms of assembly, homooligomer. Interacts (via NPF1 motif) with EHD1 (via EH domain); the interaction is direct and probably recruits EHD1 to membranes. Interacts with EHD3 (via EH domain). Interacts with RAB35 (GTP-bound form); the interaction is direct and probably recruits MICALL1 to membranes. Interacts with ACAP2; the interaction is indirect through RAB35. Interacts with RAB8A (GTP-bound form); regulates RAB8A association with recycling endosomes. Interacts with RAB13 (GTP-bound form). Interacts with ARF6 (GTP-bound form). Interacts with PACSIN2 (via the SH3 domain). Interacts with DPYSL2.

Its subcellular location is the recycling endosome membrane. It localises to the late endosome membrane. It is found in the cell projection. The protein resides in the cilium membrane. The protein localises to the cytoplasm. Its subcellular location is the cytoskeleton. It localises to the microtubule organizing center. It is found in the centrosome. The protein resides in the centriole. Its function is as follows. Lipid-binding protein with higher affinity for phosphatidic acid, a lipid enriched in recycling endosome membranes. On endosome membranes, acts as a downstream effector of Rab proteins recruiting cytosolic proteins to regulate membrane tubulation. Involved in a late step of receptor-mediated endocytosis regulating for instance endocytosed-EGF receptor trafficking. Alternatively, regulates slow endocytic recycling of endocytosed proteins back to the plasma membrane. Also involved in cargo protein delivery to the plasma membrane. Plays a role in ciliogenesis coordination, recruits EHD1 to primary cilium where it is anchored to the centriole through interaction with tubulins. May indirectly play a role in neurite outgrowth. The sequence is that of MICAL-like protein 1 (MICALL1) from Bos taurus (Bovine).